The sequence spans 172 residues: Achaete-scute homolog 4 (172 aa).

The bHLH domain maps to 72-124; that stretch reads AFLRKRNERERQRVRCVNEGYARLRDHLPRELADKRLSKVETLRAAIDYIKHL. The tract at residues 144-172 is disordered; it reads QRRAECNSDGESKASSAPSPSSEPEEGGS. Positions 145–155 are enriched in basic and acidic residues; sequence RRAECNSDGES. A compositionally biased stretch (low complexity) spans 156 to 165; that stretch reads KASSAPSPSS.

Expressed in skin. 7-fold higher expression in fetal skin than in adult skin. Weak expression also detected in fetal lung, aorta and brain, and in adult stomach, kidney, ovary and breast.

The protein localises to the nucleus. Could be a transcriptional regulator involved in skin development. The sequence is that of Achaete-scute homolog 4 (ASCL4) from Homo sapiens (Human).